Consider the following 335-residue polypeptide: Probable cytosolic iron-sulfur protein assembly protein Ciao1 (335 aa).

WD repeat units lie at residues glycine 12–lysine 51, glycine 57–asparagine 96, glycine 101–cysteine 140, proline 146–aspartate 185, serine 192–glycine 231, glutamine 250–glutamate 289, and alanine 301–glutamate 335.

The protein belongs to the WD repeat CIA1 family. Post-translationally, conjugated to URM1, a ubiquitin-like protein.

Its function is as follows. Essential component of the cytosolic iron-sulfur (Fe/S) protein assembly machinery. Required for the maturation of extramitochondrial Fe/S proteins. This Drosophila melanogaster (Fruit fly) protein is Probable cytosolic iron-sulfur protein assembly protein Ciao1.